Here is a 197-residue protein sequence, read N- to C-terminus: Phosphoheptose isomerase (197 aa).

Residues 34 to 196 (MVQCLLGGNK…DRTLFPQDEQ (163 aa)) enclose the SIS domain. A substrate-binding site is contributed by 49–51 (NGG). Residues histidine 58 and glutamate 62 each coordinate Zn(2+). Substrate-binding positions include glutamate 62, 91–92 (ND), 117–119 (STS), serine 122, and glutamine 172. 2 residues coordinate Zn(2+): glutamine 172 and histidine 180.

The protein belongs to the SIS family. GmhA subfamily. As to quaternary structure, homotetramer. The cofactor is Zn(2+).

It localises to the cytoplasm. It carries out the reaction 2 D-sedoheptulose 7-phosphate = D-glycero-alpha-D-manno-heptose 7-phosphate + D-glycero-beta-D-manno-heptose 7-phosphate. It functions in the pathway carbohydrate biosynthesis; D-glycero-D-manno-heptose 7-phosphate biosynthesis; D-glycero-alpha-D-manno-heptose 7-phosphate and D-glycero-beta-D-manno-heptose 7-phosphate from sedoheptulose 7-phosphate: step 1/1. In terms of biological role, catalyzes the isomerization of sedoheptulose 7-phosphate in D-glycero-D-manno-heptose 7-phosphate. This Shewanella frigidimarina (strain NCIMB 400) protein is Phosphoheptose isomerase.